We begin with the raw amino-acid sequence, 258 residues long: MGKKDKRWVLQRKNDHYYNLAKKRNYRSRATYKLFQLNEKFNLIKERNVVVDLGCAPGGWLQAARDIVGEKGFIVGIDLQTVKPLPYENVIAIKGDMTKEEILKQAKDLLPEKPDVIICDASPNISGVWDVDHARSLELTTMALMTATKMLKKGGNFVVKVFQGDLFEKYVQLVSEYFDKAFTTKPRASRDESAEVYVIGKRFNGRKFDINSKSPIVKLLDTNPEEKEITSPSLRKEISKEDSGLMIKRIKEMRSKKE.

Residues glycine 58, tryptophan 60, aspartate 78, aspartate 96, and aspartate 120 each contribute to the S-adenosyl-L-methionine site. The active-site Proton acceptor is the lysine 160.

This sequence belongs to the class I-like SAM-binding methyltransferase superfamily. RNA methyltransferase RlmE family.

The protein resides in the cytoplasm. It carries out the reaction uridine(2552) in 23S rRNA + S-adenosyl-L-methionine = 2'-O-methyluridine(2552) in 23S rRNA + S-adenosyl-L-homocysteine + H(+). Specifically methylates the uridine in position 2552 of 23S rRNA at the 2'-O position of the ribose in the fully assembled 50S ribosomal subunit. The sequence is that of Ribosomal RNA large subunit methyltransferase E from Methanococcus maripaludis (strain C7 / ATCC BAA-1331).